Reading from the N-terminus, the 50-residue chain is Parvalbumin (50 aa).

The region spanning 38 to 50 is the EF-hand domain; that stretch reads KTHEQVKKVFNIL.

The protein belongs to the parvalbumin family.

In terms of biological role, probably regulates the activity of the caudal neurosecretory system. Binds two calcium ions. This chain is Parvalbumin, found in Scyliorhinus canicula (Small-spotted catshark).